Reading from the N-terminus, the 327-residue chain is tRNA dimethylallyltransferase (327 aa).

18–25 provides a ligand contact to ATP; sequence GPTASGKT. 20–25 contacts substrate; the sequence is TASGKT. 3 interaction with substrate tRNA regions span residues 43-46, 167-171, and 251-256; these read DSAL, QRVQR, and RCVGYR.

This sequence belongs to the IPP transferase family. In terms of assembly, monomer. Requires Mg(2+) as cofactor.

The catalysed reaction is adenosine(37) in tRNA + dimethylallyl diphosphate = N(6)-dimethylallyladenosine(37) in tRNA + diphosphate. Functionally, catalyzes the transfer of a dimethylallyl group onto the adenine at position 37 in tRNAs that read codons beginning with uridine, leading to the formation of N6-(dimethylallyl)adenosine (i(6)A). The polypeptide is tRNA dimethylallyltransferase (Methylibium petroleiphilum (strain ATCC BAA-1232 / LMG 22953 / PM1)).